Consider the following 154-residue polypeptide: Myoglobin (154 aa).

A Globin domain is found at 2–148; it reads GLSDGEWQLV…FRNDIAAKYK (147 aa). A Phosphoserine modification is found at S4. H65 is a binding site for nitrite. H65 is an O2 binding site. Residue T68 is modified to Phosphothreonine. H94 lines the heme b pocket.

The protein belongs to the globin family. As to quaternary structure, monomeric.

It is found in the cytoplasm. It localises to the sarcoplasm. It catalyses the reaction Fe(III)-heme b-[protein] + nitric oxide + H2O = Fe(II)-heme b-[protein] + nitrite + 2 H(+). The catalysed reaction is H2O2 + AH2 = A + 2 H2O. In terms of biological role, monomeric heme protein which primary function is to store oxygen and facilitate its diffusion within muscle tissues. Reversibly binds oxygen through a pentacoordinated heme iron and enables its timely and efficient release as needed during periods of heightened demand. Depending on the oxidative conditions of tissues and cells, and in addition to its ability to bind oxygen, it also has a nitrite reductase activity whereby it regulates the production of bioactive nitric oxide. Under stress conditions, like hypoxia and anoxia, it also protects cells against reactive oxygen species thanks to its pseudoperoxidase activity. This chain is Myoglobin (MB), found in Lutra lutra (European river otter).